The following is a 901-amino-acid chain: Alanine--tRNA ligase (901 aa).

Residues His-581, His-585, Cys-684, and His-688 each coordinate Zn(2+).

It belongs to the class-II aminoacyl-tRNA synthetase family. It depends on Zn(2+) as a cofactor.

The protein localises to the cytoplasm. It catalyses the reaction tRNA(Ala) + L-alanine + ATP = L-alanyl-tRNA(Ala) + AMP + diphosphate. Functionally, catalyzes the attachment of alanine to tRNA(Ala) in a two-step reaction: alanine is first activated by ATP to form Ala-AMP and then transferred to the acceptor end of tRNA(Ala). Also edits incorrectly charged Ser-tRNA(Ala) and Gly-tRNA(Ala) via its editing domain. This chain is Alanine--tRNA ligase, found in Mycobacterium ulcerans (strain Agy99).